The following is a 304-amino-acid chain: Oxygen-dependent coproporphyrinogen-III oxidase (304 aa).

Serine 93 serves as a coordination point for substrate. A divalent metal cation is bound by residues histidine 97 and histidine 107. Histidine 107 acts as the Proton donor in catalysis. 109–111 (NVR) contacts substrate. A divalent metal cation contacts are provided by histidine 146 and histidine 176. Residues 241–276 (YVEFNLVYDRGTLFGLQSGGRTESILMSLPPQVRWA) form an important for dimerization region. Residue 259-261 (GGR) coordinates substrate.

This sequence belongs to the aerobic coproporphyrinogen-III oxidase family. Homodimer. A divalent metal cation serves as cofactor.

The protein localises to the cytoplasm. The catalysed reaction is coproporphyrinogen III + O2 + 2 H(+) = protoporphyrinogen IX + 2 CO2 + 2 H2O. The protein operates within porphyrin-containing compound metabolism; protoporphyrin-IX biosynthesis; protoporphyrinogen-IX from coproporphyrinogen-III (O2 route): step 1/1. Its function is as follows. Involved in the heme biosynthesis. Catalyzes the aerobic oxidative decarboxylation of propionate groups of rings A and B of coproporphyrinogen-III to yield the vinyl groups in protoporphyrinogen-IX. In Pseudomonas fluorescens (strain Pf0-1), this protein is Oxygen-dependent coproporphyrinogen-III oxidase.